The sequence spans 32 residues: Calcitonin (32 aa).

An intrachain disulfide couples C1 to C7. P32 bears the Proline amide mark.

The protein belongs to the calcitonin family.

The protein localises to the secreted. In terms of biological role, causes a rapid but short-lived drop in the level of calcium and phosphate in blood by promoting the incorporation of those ions in the bones. This is Calcitonin from Anguilla japonica (Japanese eel).